We begin with the raw amino-acid sequence, 453 residues long: Alpha-galacturonidase (453 aa).

Residue 11 to 72 (IKIAYIGGGS…SQWEYKSVDS (62 aa)) participates in NAD(+) binding. Position 151 (Asn-151) interacts with substrate. Cys-173 provides a ligand contact to Mn(2+). Catalysis depends on His-174, which acts as the Proton donor. His-209 is a Mn(2+) binding site.

Belongs to the glycosyl hydrolase 4 family. Homotetramer. NAD(+) serves as cofactor. Requires Mn(2+) as cofactor.

The enzyme catalyses [(1-&gt;4)-alpha-D-galacturonosyl](n) + H2O = alpha-D-galacturonate + [(1-&gt;4)-alpha-D-galacturonosyl](n-1). Alpha-galacturonidase able to catalyze the hydrolysis of the chromogenic substrate p-nitrophenyl-alpha-D-galacturonic acid (pNPalphaGalUA). It is probable that alpha-1,4-di-galacturonate (GalUA(2)) is the naturally occurring substrate. The protein is Alpha-galacturonidase of Thermoanaerobacter italicus (strain DSM 9252 / Ab9).